The primary structure comprises 129 residues: uncharacterized protein (129 aa).

A disordered region spans residues 1 to 129; it reads MGRMASPLRS…PARQSARMAR (129 aa). The span at 18 to 46 shows a compositional bias: basic and acidic residues; that stretch reads ESTRHKETSTVRVETSSHREETSSHRVET. Residues 47–59 show a composition bias toward low complexity; it reads SSRQVRTSSRQVE. Residues 70–97 are compositionally biased toward polar residues; that stretch reads LTPSTKRLPQFLEVSSQHVETSSQCTET.

This is an uncharacterized protein from Mus musculus (Mouse).